The following is a 337-amino-acid chain: N-acetyl-gamma-glutamyl-phosphate reductase (337 aa).

Cys-145 is a catalytic residue.

Belongs to the NAGSA dehydrogenase family. Type 1 subfamily.

It is found in the cytoplasm. The catalysed reaction is N-acetyl-L-glutamate 5-semialdehyde + phosphate + NADP(+) = N-acetyl-L-glutamyl 5-phosphate + NADPH + H(+). It participates in amino-acid biosynthesis; L-arginine biosynthesis; N(2)-acetyl-L-ornithine from L-glutamate: step 3/4. Catalyzes the NADPH-dependent reduction of N-acetyl-5-glutamyl phosphate to yield N-acetyl-L-glutamate 5-semialdehyde. The polypeptide is N-acetyl-gamma-glutamyl-phosphate reductase (Methanosarcina barkeri (strain Fusaro / DSM 804)).